The sequence spans 387 residues: MASSSLPLSLPFPLRSLTSTTRSLPFQCSPLFFSIPSSIVCFSTQNPDREEVRWLREEQRWIREEQRWIREEQRWIRERESLLQEISDLQLRIQSLESRNSQLGNSIPDTISNIAALLQVLKEKNRISESGLSATPMVLESTREQIVEEVEEEEKRVIIAEEKVRVSEPVKKIKRRILKVGSEGDDVQALQEALLKLGFYSGEEDMEFSSFSSGTASAVKTWQASLGVREDGVMTAELLQRLFMDEDVETDKDEASTMKKEEAGNGAVFTSVTQVPEKKQSIVKDQSDREVDVTQNRVFLLGENRWEDPSRLIGRNKPVDRSESTNTKTRCITCRGEGRLMCLECDGTGEPNIEPQFMEWVGEDTKCPYCEGLGYTVCDVCDGKKNL.

Residues Met-1–Val-40 constitute a chloroplast transit peptide. Coiled coils occupy residues Glu-72–Ser-106 and Arg-143–Lys-163. The segment at Pro-318 to Leu-387 adopts a CR-type zinc-finger fold.

As to quaternary structure, interacts with HSP21; the formed complex associates with the plastid-encoded RNA polymerase (PEP) complex not only during transcription initiation, but also during elongation and termination, and with a stronger efficiency in illuminated chloroplasts. Binds to promoter regions of PEP-dependent genes, especially after a heat stress. Interacts with FLN2.

The protein resides in the plastid. It is found in the chloroplast stroma. The protein localises to the chloroplast nucleoid. The catalysed reaction is Catalyzes the rearrangement of -S-S- bonds in proteins.. Functionally, exhibits zinc-dependent disulfide isomerase activity. Required for seedling and chloroplast development under heat stress, probably by maintaining plastid-encoded RNA polymerase (PEP)-dependent transcription. In Arabidopsis thaliana (Mouse-ear cress), this protein is Protein disulfide isomerase pTAC5, chloroplastic.